The sequence spans 32 residues: Protamine S4 (32 aa).

The segment at 1 to 32 (GCKKRKARKRPKCKKARKRPKCKRRKVAKKKC) is disordered.

Testis.

Its subcellular location is the nucleus. It is found in the chromosome. Protamines substitute for histones in the chromatin of sperm during the haploid phase of spermatogenesis. They compact sperm DNA into a highly condensed, stable and inactive complex. The protein is Protamine S4 of Scyliorhinus canicula (Small-spotted catshark).